The chain runs to 535 residues: CTP synthase (535 aa).

The tract at residues 1–266 (MKTKFIFITG…DEQVVEKLNI (266 aa)) is amidoligase domain. Residue serine 14 coordinates CTP. Serine 14 is a binding site for UTP. Residues 15 to 20 (SIGKGL) and aspartate 72 each bind ATP. Mg(2+) is bound by residues aspartate 72 and glutamate 140. Residues 147–149 (DIE), 187–192 (KTKPTQ), and lysine 223 each bind CTP. UTP-binding positions include 187–192 (KTKPTQ) and lysine 223. The Glutamine amidotransferase type-1 domain maps to 292–534 (RIAIVGKYVN…IGASLTHRNQ (243 aa)). Glycine 354 provides a ligand contact to L-glutamine. The active-site Nucleophile; for glutamine hydrolysis is cysteine 381. Residues 382–385 (LGMQ), glutamate 405, and arginine 462 contribute to the L-glutamine site. Residues histidine 507 and glutamate 509 contribute to the active site.

The protein belongs to the CTP synthase family. Homotetramer.

It catalyses the reaction UTP + L-glutamine + ATP + H2O = CTP + L-glutamate + ADP + phosphate + 2 H(+). The enzyme catalyses L-glutamine + H2O = L-glutamate + NH4(+). It carries out the reaction UTP + NH4(+) + ATP = CTP + ADP + phosphate + 2 H(+). The protein operates within pyrimidine metabolism; CTP biosynthesis via de novo pathway; CTP from UDP: step 2/2. With respect to regulation, allosterically activated by GTP, when glutamine is the substrate; GTP has no effect on the reaction when ammonia is the substrate. The allosteric effector GTP functions by stabilizing the protein conformation that binds the tetrahedral intermediate(s) formed during glutamine hydrolysis. Inhibited by the product CTP, via allosteric rather than competitive inhibition. Catalyzes the ATP-dependent amination of UTP to CTP with either L-glutamine or ammonia as the source of nitrogen. Regulates intracellular CTP levels through interactions with the four ribonucleotide triphosphates. This chain is CTP synthase, found in Trichlorobacter lovleyi (strain ATCC BAA-1151 / DSM 17278 / SZ) (Geobacter lovleyi).